A 61-amino-acid polypeptide reads, in one-letter code: Metallothionein-1C (61 aa).

The segment at 1–29 is beta; it reads MDPNCSCSTGGSCSCAGSCTCKACRCTSC. Residues Cys-5, Cys-7, Cys-13, Cys-15, Cys-19, Cys-21, Cys-24, Cys-26, Cys-29, Cys-33, Cys-34, Cys-36, Cys-37, Cys-41, Cys-44, Cys-48, Cys-50, Cys-57, Cys-59, and Cys-60 each contribute to the a divalent metal cation site. Residues 30 to 61 are alpha; it reads KKSCCSCCPAGCARCAQGCICKGASDKCSCCA.

It belongs to the metallothionein superfamily. Type 1 family. Monomer.

Metallothioneins have a high content of cysteine residues that bind various heavy metals; these proteins are transcriptionally regulated by both heavy metals and glucocorticoids. The sequence is that of Metallothionein-1C (MT1C) from Sus scrofa (Pig).